The chain runs to 123 residues: MRTRVMAGLCVALVVMCLYMPQPCEAQYEALVASILGKLSGLWHSDTVDFMGHTCHIRRKPKFRKFKLYHEGKFWCPGWTHLEGNSRTKSRSGSTREATKDFVHKALQNKLITKNSADAWLKG.

The signal sequence occupies residues 1–26; it reads MRTRVMAGLCVALVVMCLYMPQPCEA. A disulfide bridge connects residues Cys-55 and Cys-76.

Strong expression in hemocytes, heart and muscle, with weaker expression detected in gills and hepatopancreas. No expression detected in eyes.

It localises to the secreted. Functionally, binds to bacterial LPS and may specifically inhibit the LPS-mediated activation of the hemolymph coagulation. It has a strong antibacterial effect especially on the growth of Gram-negative bacteria. The sequence is that of Anti-lipopolysaccharide factor from Scylla serrata (Mud crab).